A 309-amino-acid chain; its full sequence is Nudix hydrolase 14, chloroplastic (309 aa).

Residues 1–60 (MAGFTLLPSRLLAFPSRALPRRLHHHHAKLILRCKMSSSSSSLTQSITLPSQPNEPVLVS) constitute a chloroplast transit peptide. The Nudix hydrolase domain maps to 139–292 (ARGPAVAVLI…KVLMSIGLYE (154 aa)). The short motif at 179-200 (MLDDDKGDFVGTAVREVEEEIG) is the Nudix box element. The Mg(2+) site is built by Glu194 and Glu198.

This sequence belongs to the Nudix hydrolase family. In terms of assembly, homodimer. Requires Mg(2+) as cofactor. The cofactor is Mn(2+). As to expression, expressed in roots, leaves, stems and inflorescences.

The protein resides in the plastid. It is found in the chloroplast. The catalysed reaction is ADP-sugar + H2O = AMP + alpha-D-aldose 1-phosphate.. Its function is as follows. Mediates the hydrolysis of some nucleoside diphosphate derivatives. Can use ADP-glucose, ADP-mannose and ADP-ribose as substrates. Regulates the intracellular ADP-glucose levels linked to starch biosynthesis. In Arabidopsis thaliana (Mouse-ear cress), this protein is Nudix hydrolase 14, chloroplastic (NUDT14).